A 627-amino-acid chain; its full sequence is Carene synthase, chloroplastic (627 aa).

A chloroplast-targeting transit peptide spans methionine 1–valine 36. Aspartate 378, aspartate 382, and aspartate 530 together coordinate Mg(2+). Positions aspartate 378 to aspartate 382 match the DDXXD motif motif.

It belongs to the terpene synthase family. Tpsd subfamily. Mg(2+) serves as cofactor. Mn(2+) is required as a cofactor.

The protein localises to the plastid. Its subcellular location is the chloroplast. It catalyses the reaction (2E)-geranyl diphosphate = (+)-car-3-ene + diphosphate. It functions in the pathway terpene metabolism; oleoresin biosynthesis. In terms of biological role, terpene synthase (TPS) involved in defensive oleoresin formation in conifers in response to insect attack or other injury. The protein is Carene synthase, chloroplastic (3CAR) of Picea glauca (White spruce).